We begin with the raw amino-acid sequence, 809 residues long: Leucine-rich repeat and calponin homology domain-containing protein (809 aa).

The segment at 27–53 (GSASLPGSGTGSGSGIGHAGNTSSSTS) is disordered. Positions 34 to 44 (SGTGSGSGIGH) are enriched in gly residues. 9 LRR repeats span residues 72 to 96 (EAHFSGELILTNRKLKDFPRTGTKY), 98 to 121 (LTDTVIADLSRNRFAELPEEVTTF), 122 to 144 (AFLETLLLYHNTIRSIPESVKQL), 145 to 168 (SSLTYLDLRSNQLSSLPREICFLP), 170 to 189 (QVLLVSNNRLTSLPDELGRL), 191 to 213 (QTLTDLDASYNQLANLPARLGEL), 214 to 236 (RSLRSLSLRSNHLLYLPRELTCL), 238 to 258 (LISLDVSNNKIASLPLEIRHM), and 260 to 282 (TLVELQLENNPLTSPPASLCMRG). Disordered regions lie at residues 295–373 (TKDE…LHCV), 423–442 (LSYAHSNSSSNGSSPDQDDD), and 490–550 (KHPN…VDDV). A compositionally biased stretch (polar residues) spans 319–336 (HNSSGNVLEASTTGSTNN). Basic and acidic residues predominate over residues 351–368 (GLDKRWSHDAPTKSKTDS). The span at 518-532 (NTLPKSIMKQNSNQI) shows a compositional bias: polar residues. The 115-residue stretch at 662–776 (QREETELMSQ…TVGELFRLHG (115 aa)) folds into the Calponin-homology (CH) domain. Residues 783-809 (GNSSGAATPTKSPTRTTRATMSPTPLA) are disordered. Polar residues predominate over residues 788–809 (AATPTKSPTRTTRATMSPTPLA).

The protein resides in the cytoplasm. The protein localises to the cytoskeleton. Its subcellular location is the cell cortex. It is found in the cleavage furrow. Its function is as follows. May play a role in the stabilization of the actin-rich cell cortex during cell division. The polypeptide is Leucine-rich repeat and calponin homology domain-containing protein (Drosophila melanogaster (Fruit fly)).